The sequence spans 458 residues: tRNA modification GTPase MnmE (458 aa).

(6S)-5-formyl-5,6,7,8-tetrahydrofolate-binding residues include arginine 30, glutamate 90, and lysine 129. The 155-residue stretch at 225–379 (GLSICLIGCP…LHQTIDTIIW (155 aa)) folds into the TrmE-type G domain. Asparagine 235 contributes to the K(+) binding site. GTP contacts are provided by residues 235-240 (NVGKSS), 254-260 (SPIPGTT), and 279-282 (DTAG). Serine 239 provides a ligand contact to Mg(2+). Serine 254, isoleucine 256, and threonine 259 together coordinate K(+). Threonine 260 is a Mg(2+) binding site. Lysine 458 provides a ligand contact to (6S)-5-formyl-5,6,7,8-tetrahydrofolate.

Belongs to the TRAFAC class TrmE-Era-EngA-EngB-Septin-like GTPase superfamily. TrmE GTPase family. Homodimer. Heterotetramer of two MnmE and two MnmG subunits. The cofactor is K(+).

Its subcellular location is the cytoplasm. Its function is as follows. Exhibits a very high intrinsic GTPase hydrolysis rate. Involved in the addition of a carboxymethylaminomethyl (cmnm) group at the wobble position (U34) of certain tRNAs, forming tRNA-cmnm(5)s(2)U34. This is tRNA modification GTPase MnmE from Protochlamydia amoebophila (strain UWE25).